A 340-amino-acid polypeptide reads, in one-letter code: Transcription initiation factor IIB (340 aa).

A TFIIB-type zinc finger spans residues 16-49 (VKMICSECREDPPNLVEEFSSGDTVCGSCGLVLG). C20, C23, C41, and C44 together coordinate Zn(2+). 2 repeat units span residues 128–204 (MCDA…TLQR) and 239–315 (FCNR…LLHA).

Belongs to the TFIIB family. As to quaternary structure, associates with TFIID-IIA (DA complex) to form TFIID-IIA-IIB (DAB-complex) which is then recognized by polymerase II.

The protein localises to the nucleus. Functionally, general factor that plays a major role in the activation of eukaryotic genes transcribed by RNA polymerase II. This chain is Transcription initiation factor IIB (sua7), found in Schizosaccharomyces pombe (strain 972 / ATCC 24843) (Fission yeast).